The chain runs to 427 residues: Adenylosuccinate synthetase (427 aa).

Residues 11-17 (GDEGKGK) and 39-41 (GHT) contribute to the GTP site. Aspartate 12 serves as the catalytic Proton acceptor. Mg(2+) is bound by residues aspartate 12 and glycine 39. IMP is bound by residues 12–15 (DEGK), 37–40 (NAGH), threonine 132, arginine 146, glutamine 223, threonine 238, and arginine 302. The Proton donor role is filled by histidine 40. Residue 298–304 (TTTGRPR) participates in substrate binding. GTP is bound by residues arginine 304, 330–332 (KLD), and 412–414 (GVG).

The protein belongs to the adenylosuccinate synthetase family. In terms of assembly, homodimer. Requires Mg(2+) as cofactor.

It localises to the cytoplasm. The catalysed reaction is IMP + L-aspartate + GTP = N(6)-(1,2-dicarboxyethyl)-AMP + GDP + phosphate + 2 H(+). It participates in purine metabolism; AMP biosynthesis via de novo pathway; AMP from IMP: step 1/2. Plays an important role in the de novo pathway and in the salvage pathway of purine nucleotide biosynthesis. Catalyzes the first committed step in the biosynthesis of AMP from IMP. The sequence is that of Adenylosuccinate synthetase (purA) from Dictyostelium discoideum (Social amoeba).